A 248-amino-acid chain; its full sequence is tRNA uridine(34) hydroxylase (248 aa).

The 95-residue stretch at 128-222 (EGRPVVMLDT…YFEEVGGAHY (95 aa)) folds into the Rhodanese domain. The active-site Cysteine persulfide intermediate is the C182.

Belongs to the TrhO family.

The enzyme catalyses uridine(34) in tRNA + AH2 + O2 = 5-hydroxyuridine(34) in tRNA + A + H2O. Functionally, catalyzes oxygen-dependent 5-hydroxyuridine (ho5U) modification at position 34 in tRNAs. This Thiobacillus denitrificans (strain ATCC 25259 / T1) protein is tRNA uridine(34) hydroxylase.